We begin with the raw amino-acid sequence, 190 residues long: Probable RNA-binding protein 18 (190 aa).

In terms of domain architecture, RRM spans 25-106; sequence HRLWIGNLDP…KKLVVRWAHA (82 aa). Positions 166 to 190 are disordered; that stretch reads VYSYFKPPDKKRTTPYSRTAWKSRR.

This chain is Probable RNA-binding protein 18 (RBM18), found in Pongo abelii (Sumatran orangutan).